Here is an 85-residue protein sequence, read N- to C-terminus: Small ribosomal subunit protein bS16 (85 aa).

The protein belongs to the bacterial ribosomal protein bS16 family.

The sequence is that of Small ribosomal subunit protein bS16 from Clostridium novyi (strain NT).